The primary structure comprises 150 residues: 6,7-dimethyl-8-ribityllumazine synthase (150 aa).

5-amino-6-(D-ribitylamino)uracil-binding positions include F11, 43-45 (VYD), and 67-69 (AVI). 72–73 (AT) contacts (2S)-2-hydroxy-3-oxobutyl phosphate. Catalysis depends on H75, which acts as the Proton donor. L100 provides a ligand contact to 5-amino-6-(D-ribitylamino)uracil. (2S)-2-hydroxy-3-oxobutyl phosphate is bound at residue R115.

It belongs to the DMRL synthase family.

The enzyme catalyses (2S)-2-hydroxy-3-oxobutyl phosphate + 5-amino-6-(D-ribitylamino)uracil = 6,7-dimethyl-8-(1-D-ribityl)lumazine + phosphate + 2 H2O + H(+). Its pathway is cofactor biosynthesis; riboflavin biosynthesis; riboflavin from 2-hydroxy-3-oxobutyl phosphate and 5-amino-6-(D-ribitylamino)uracil: step 1/2. In terms of biological role, catalyzes the formation of 6,7-dimethyl-8-ribityllumazine by condensation of 5-amino-6-(D-ribitylamino)uracil with 3,4-dihydroxy-2-butanone 4-phosphate. This is the penultimate step in the biosynthesis of riboflavin. This Pyrobaculum neutrophilum (strain DSM 2338 / JCM 9278 / NBRC 100436 / V24Sta) (Thermoproteus neutrophilus) protein is 6,7-dimethyl-8-ribityllumazine synthase.